Here is a 409-residue protein sequence, read N- to C-terminus: Elongation factor Tu (409 aa).

Residues 10–214 (KPHVNIGTIG…AVDAYIPTPE (205 aa)) enclose the tr-type G domain. The segment at 19–26 (GHVDHGKT) is G1. 19 to 26 (GHVDHGKT) serves as a coordination point for GTP. Mg(2+) is bound at residue threonine 26. The tract at residues 60-64 (GITIN) is G2. Residues 81-84 (DCPG) form a G3 region. Residues 81-85 (DCPGH) and 136-139 (NKKD) contribute to the GTP site. The tract at residues 136-139 (NKKD) is G4. The tract at residues 174 to 176 (SAL) is G5.

This sequence belongs to the TRAFAC class translation factor GTPase superfamily. Classic translation factor GTPase family. EF-Tu/EF-1A subfamily. Monomer.

It is found in the cytoplasm. It carries out the reaction GTP + H2O = GDP + phosphate + H(+). Functionally, GTP hydrolase that promotes the GTP-dependent binding of aminoacyl-tRNA to the A-site of ribosomes during protein biosynthesis. The polypeptide is Elongation factor Tu (Gloeobacter violaceus (strain ATCC 29082 / PCC 7421)).